Reading from the N-terminus, the 109-residue chain is U4-lycotoxin-Ls1d (109 aa).

The first 22 residues, 1–22 (MKVLVLFSVLFLTLFSYSSTEA), serve as a signal peptide directing secretion. Positions 23–44 (MDEFDSDAEEDMLSLMANEQVR) are excised as a propeptide. Residues 45–88 (AKACTPRLHDCSHDRHSCCRGELFKDVCYCFYPEGEDKTEVCSC) form a knottin domain region. 4 disulfides stabilise this stretch: Cys-48/Cys-63, Cys-55/Cys-72, Cys-62/Cys-88, and Cys-74/Cys-86. Residues 89–108 (QQPKSHKYIEKVVDKARTVV) are linear cationic cytotoxin domain.

It belongs to the neurotoxin 19 (CSTX) family. 05 (U4-Lctx) subfamily. In terms of tissue distribution, expressed by the venom gland.

It localises to the secreted. Functionally, enhances the high-affinity desensitization of human P2RX3 purinoceptors. In Lycosa singoriensis (Wolf spider), this protein is U4-lycotoxin-Ls1d.